Consider the following 309-residue polypeptide: Glutaminase (309 aa).

Substrate is bound by residues Ser-64, Asn-114, Glu-160, Asn-167, Tyr-191, Tyr-243, and Val-261.

It belongs to the glutaminase family. As to quaternary structure, homotetramer.

It catalyses the reaction L-glutamine + H2O = L-glutamate + NH4(+). The protein is Glutaminase of Agrobacterium fabrum (strain C58 / ATCC 33970) (Agrobacterium tumefaciens (strain C58)).